Here is a 448-residue protein sequence, read N- to C-terminus: Cysteine--tRNA ligase (448 aa).

Cysteine 27 contributes to the Zn(2+) binding site. The short motif at 29-39 is the 'HIGH' region element; it reads PTVYNYIHVGN. Positions 210, 235, and 239 each coordinate Zn(2+). Positions 267–271 match the 'KMSKS' region motif; sequence KMSKS. Position 270 (lysine 270) interacts with ATP.

Belongs to the class-I aminoacyl-tRNA synthetase family. As to quaternary structure, monomer. Requires Zn(2+) as cofactor.

It is found in the cytoplasm. The enzyme catalyses tRNA(Cys) + L-cysteine + ATP = L-cysteinyl-tRNA(Cys) + AMP + diphosphate. The chain is Cysteine--tRNA ligase from Lactococcus lactis subsp. lactis (strain IL1403) (Streptococcus lactis).